Consider the following 759-residue polypeptide: Protein YdeP (759 aa).

2 residues coordinate [4Fe-4S] cluster: Cys-49 and Cys-52.

It belongs to the prokaryotic molybdopterin-containing oxidoreductase family. Requires [4Fe-4S] cluster as cofactor. Mo-bis(molybdopterin guanine dinucleotide) is required as a cofactor.

Functionally, probably involved in acid resistance. This chain is Protein YdeP (ydeP), found in Shigella flexneri.